The primary structure comprises 88 residues: Small ribosomal subunit protein uS15 (88 aa).

This sequence belongs to the universal ribosomal protein uS15 family. Part of the 30S ribosomal subunit. Forms a bridge to the 50S subunit in the 70S ribosome, contacting the 23S rRNA.

Its function is as follows. One of the primary rRNA binding proteins, it binds directly to 16S rRNA where it helps nucleate assembly of the platform of the 30S subunit by binding and bridging several RNA helices of the 16S rRNA. Functionally, forms an intersubunit bridge (bridge B4) with the 23S rRNA of the 50S subunit in the ribosome. The sequence is that of Small ribosomal subunit protein uS15 from Leptospira interrogans serogroup Icterohaemorrhagiae serovar copenhageni (strain Fiocruz L1-130).